The chain runs to 502 residues: Probable mRNA-splicing protein ubp10 (502 aa).

A UBP-type; degenerate zinc finger spans residues 56-153 (SQNLYLDTIN…YVMRPTFTKL (98 aa)). Zn(2+)-binding residues include Cys-89, Cys-92, His-108, and His-114. The 324-residue stretch at 178-501 (VGMNNIKNND…ESFIQLWERS (324 aa)) folds into the USP domain.

This sequence belongs to the peptidase C19 family.

It is found in the nucleus. Its function is as follows. May play a role in mRNA splicing. It is unsure if the protein really exhibits hydrolase activity. Could be a competitor of ubiquitin C-terminal hydrolases (UCHs). In Schizosaccharomyces pombe (strain 972 / ATCC 24843) (Fission yeast), this protein is Probable mRNA-splicing protein ubp10 (ubp10).